A 236-amino-acid chain; its full sequence is Small ribosomal subunit protein uS2c (236 aa).

Belongs to the universal ribosomal protein uS2 family.

The protein resides in the plastid. It localises to the chloroplast. The protein is Small ribosomal subunit protein uS2c (rps2) of Nandina domestica (Heavenly bamboo).